The following is a 206-amino-acid chain: Thymidylate kinase (206 aa).

Position 11–18 (G11–T18) interacts with ATP.

It belongs to the thymidylate kinase family.

The enzyme catalyses dTMP + ATP = dTDP + ADP. Functionally, phosphorylation of dTMP to form dTDP in both de novo and salvage pathways of dTTP synthesis. The polypeptide is Thymidylate kinase (Paraburkholderia xenovorans (strain LB400)).